Reading from the N-terminus, the 123-residue chain is Small ribosomal subunit protein uS13 (123 aa).

Positions 95-123 (GLPVRGQRTKTNARTRKGPARTVAGKKKK) are disordered.

Belongs to the universal ribosomal protein uS13 family. In terms of assembly, part of the 30S ribosomal subunit. Forms a loose heterodimer with protein S19. Forms two bridges to the 50S subunit in the 70S ribosome.

Functionally, located at the top of the head of the 30S subunit, it contacts several helices of the 16S rRNA. In the 70S ribosome it contacts the 23S rRNA (bridge B1a) and protein L5 of the 50S subunit (bridge B1b), connecting the 2 subunits; these bridges are implicated in subunit movement. Contacts the tRNAs in the A and P-sites. This chain is Small ribosomal subunit protein uS13, found in Heliobacterium modesticaldum (strain ATCC 51547 / Ice1).